Consider the following 584-residue polypeptide: Actin-binding protein IPP (584 aa).

In terms of domain architecture, BTB spans 37 to 104; sequence CDVQLQVGKE…IYTGVVNIAV (68 aa). Kelch repeat units follow at residues 296 to 343, 344 to 390, 391 to 437, 439 to 485, 487 to 533, and 535 to 583; these read YTRL…VVGG, MVYA…VCYG, AIYA…EMQG, IYAV…ALND, IYAI…TVNG, and LYVS…GVAV.

In terms of tissue distribution, expression seems confined to tissues derived from trophectoderm and primitive endoderm.

Its subcellular location is the cytoplasm. The protein resides in the cytoskeleton. Its function is as follows. May play a role in organizing the actin cytoskeleton. The polypeptide is Actin-binding protein IPP (Ipp) (Mus musculus (Mouse)).